The chain runs to 374 residues: L-serine/homoserine O-acetyltransferase (374 aa).

The AB hydrolase-1 domain occupies 46–357 (AVLVLTGLSP…TPAGHDAFLV (312 aa)). Serine 149 serves as the catalytic Nucleophile. Catalysis depends on residues aspartate 319 and histidine 352.

This sequence belongs to the AB hydrolase superfamily. MetX family. Homodimer.

Its subcellular location is the cytoplasm. It carries out the reaction L-serine + acetyl-CoA = O-acetyl-L-serine + CoA. It catalyses the reaction L-homoserine + acetyl-CoA = O-acetyl-L-homoserine + CoA. Its pathway is antibiotic biosynthesis. In terms of biological role, involved in the biosynthesis of the antibiotic D-cycloserine (DCS), a cyclic structural analog of D-alanine, used as an antitubercular agent. Catalyzes the transfer of the acetyl group from acetyl-CoA to the hydroxyl group of L-serine to yield the activated serine, O-acetyl-L-serine. It prefers L-serine over L-homoserine. In Streptomyces lavendulae, this protein is L-serine/homoserine O-acetyltransferase.